Consider the following 388-residue polypeptide: Chorismate synthase (388 aa).

Positions 39 and 45 each coordinate NADP(+). Residues 95–118 (EKNEKSRRVSRPRPGHADLVGGMK) are disordered. FMN is bound by residues 130 to 132 (RSS), 251 to 252 (NA), G296, 311 to 315 (KPIPT), and R337.

The protein belongs to the chorismate synthase family. Homotetramer. FMNH2 is required as a cofactor.

The catalysed reaction is 5-O-(1-carboxyvinyl)-3-phosphoshikimate = chorismate + phosphate. It participates in metabolic intermediate biosynthesis; chorismate biosynthesis; chorismate from D-erythrose 4-phosphate and phosphoenolpyruvate: step 7/7. Catalyzes the anti-1,4-elimination of the C-3 phosphate and the C-6 proR hydrogen from 5-enolpyruvylshikimate-3-phosphate (EPSP) to yield chorismate, which is the branch point compound that serves as the starting substrate for the three terminal pathways of aromatic amino acid biosynthesis. This reaction introduces a second double bond into the aromatic ring system. In Listeria welshimeri serovar 6b (strain ATCC 35897 / DSM 20650 / CCUG 15529 / CIP 8149 / NCTC 11857 / SLCC 5334 / V8), this protein is Chorismate synthase.